Reading from the N-terminus, the 122-residue chain is Large ribosomal subunit protein uL14c (122 aa).

It belongs to the universal ribosomal protein uL14 family. Part of the 50S ribosomal subunit.

It localises to the plastid. The protein localises to the chloroplast. Binds to 23S rRNA. The polypeptide is Large ribosomal subunit protein uL14c (Chara vulgaris (Common stonewort)).